The chain runs to 246 residues: MIIPAFDLINGRTVRLYQGDYSNQKNYNVNLFNSLEVYKSKGIEIVHLVDLDGAKNSANRQIELFKKIVSHTTVPVQVGGGIRTTKDISTLLDLGVKRVVIGSSIVSNKKQVKQWLNFYGPDAIVLALDVHVDGSNKKEISIDGWQKKTNFILEEIIEYFLSSGLKHVLCTDISRDGTLLGPNFKLYKEICSNFKNINFQASGGVASLQDIIFLKKTGVKSIIIGRSLLEKKFTIEEAVKCWQRES.

The Proton acceptor role is filled by Asp-7. Asp-129 (proton donor) is an active-site residue.

This sequence belongs to the HisA/HisF family.

It is found in the cytoplasm. The enzyme catalyses 1-(5-phospho-beta-D-ribosyl)-5-[(5-phospho-beta-D-ribosylamino)methylideneamino]imidazole-4-carboxamide = 5-[(5-phospho-1-deoxy-D-ribulos-1-ylimino)methylamino]-1-(5-phospho-beta-D-ribosyl)imidazole-4-carboxamide. It functions in the pathway amino-acid biosynthesis; L-histidine biosynthesis; L-histidine from 5-phospho-alpha-D-ribose 1-diphosphate: step 4/9. In Buchnera aphidicola subsp. Acyrthosiphon pisum (strain 5A), this protein is 1-(5-phosphoribosyl)-5-[(5-phosphoribosylamino)methylideneamino] imidazole-4-carboxamide isomerase.